Reading from the N-terminus, the 742-residue chain is 5-methyltetrahydropteroyltriglutamate--homocysteine methyltransferase (742 aa).

5-methyltetrahydropteroyltri-L-glutamate contacts are provided by residues Arg-18–Lys-21 and Lys-112. L-homocysteine is bound by residues Ile-420–Ser-422 and Glu-473. L-methionine contacts are provided by residues Ile-420 to Ser-422 and Glu-473. Trp-550 lines the 5-methyltetrahydropteroyltri-L-glutamate pocket. Asp-588 is an L-homocysteine binding site. L-methionine is bound at residue Asp-588. Residue Glu-594 coordinates 5-methyltetrahydropteroyltri-L-glutamate. Zn(2+) is bound by residues His-630, Cys-632, and Glu-654. His-683 (proton donor) is an active-site residue. Position 715 (Cys-715) interacts with Zn(2+).

It belongs to the vitamin-B12 independent methionine synthase family. It depends on Zn(2+) as a cofactor.

It catalyses the reaction 5-methyltetrahydropteroyltri-L-glutamate + L-homocysteine = tetrahydropteroyltri-L-glutamate + L-methionine. Its pathway is amino-acid biosynthesis; L-methionine biosynthesis via de novo pathway; L-methionine from L-homocysteine (MetE route): step 1/1. Its function is as follows. Catalyzes the transfer of a methyl group from 5-methyltetrahydrofolate to homocysteine resulting in methionine formation. This Staphylococcus aureus (strain USA300) protein is 5-methyltetrahydropteroyltriglutamate--homocysteine methyltransferase.